We begin with the raw amino-acid sequence, 152 residues long: Lipoprotein signal peptidase (152 aa).

A run of 3 helical transmembrane segments spans residues 5-25, 61-81, and 84-104; these read LFVL…FWIV, WFFV…LATH, and LNIW…GNFI. Catalysis depends on residues Asp-114 and Asp-130. A helical membrane pass occupies residues 125–145; it reads IFNVADSYLTVGVILLVICLW.

Belongs to the peptidase A8 family.

It is found in the cell membrane. The catalysed reaction is Release of signal peptides from bacterial membrane prolipoproteins. Hydrolyzes -Xaa-Yaa-Zaa-|-(S,diacylglyceryl)Cys-, in which Xaa is hydrophobic (preferably Leu), and Yaa (Ala or Ser) and Zaa (Gly or Ala) have small, neutral side chains.. It participates in protein modification; lipoprotein biosynthesis (signal peptide cleavage). Its function is as follows. This protein specifically catalyzes the removal of signal peptides from prolipoproteins. This chain is Lipoprotein signal peptidase, found in Streptococcus pyogenes serotype M18 (strain MGAS8232).